Reading from the N-terminus, the 269-residue chain is Elongation factor Ts (269 aa).

The interval 76–79 (TDFV) is involved in Mg(2+) ion dislocation from EF-Tu.

It belongs to the EF-Ts family.

The protein localises to the cytoplasm. Associates with the EF-Tu.GDP complex and induces the exchange of GDP to GTP. It remains bound to the aminoacyl-tRNA.EF-Tu.GTP complex up to the GTP hydrolysis stage on the ribosome. The chain is Elongation factor Ts from Deinococcus geothermalis (strain DSM 11300 / CIP 105573 / AG-3a).